The chain runs to 441 residues: ATP-dependent RNA helicase RhlB (441 aa).

A Q motif motif is present at residues 9-37 (QKFADFSLNKEIKTALNESGFEFCTPIQA). The Helicase ATP-binding domain occupies 40 to 219 (LPILLQKKDI…YDHMNEPEKV (180 aa)). 53-60 (AQTGTGKT) provides a ligand contact to ATP. The DEAD box motif lies at 165–168 (DEAD). The region spanning 243-390 (KMRLLLSLIE…VTNYDSEGLL (148 aa)) is the Helicase C-terminal domain. The interval 401 to 441 (RKHNNRPQQGRNNSGRPQGRNGNRAGGRNGPRRHDQVRRHS) is disordered.

Belongs to the DEAD box helicase family. RhlB subfamily. As to quaternary structure, component of the RNA degradosome, which is a multiprotein complex involved in RNA processing and mRNA degradation.

It localises to the cytoplasm. The catalysed reaction is ATP + H2O = ADP + phosphate + H(+). Its function is as follows. DEAD-box RNA helicase involved in RNA degradation. Has RNA-dependent ATPase activity and unwinds double-stranded RNA. The sequence is that of ATP-dependent RNA helicase RhlB from Shewanella woodyi (strain ATCC 51908 / MS32).